Consider the following 644-residue polypeptide: Mitochondrial 15S rRNA processing factor CCM1 (644 aa).

Residues 1–38 (MVIVASSNMLRPDRIWLCGKYQTARTLYVVGNKSKRRN) constitute a mitochondrion transit peptide. The tract at residues 78-108 (ISKKSEKEVERSQIQSTEPSPETSTQLTQKN) is disordered. Over residues 89-108 (SQIQSTEPSPETSTQLTQKN) the composition is skewed to polar residues. PPR repeat units lie at residues 245–279 (PRET…GLQP), 280–315 (SKNT…SDKT), and 318–352 (AERA…KVEV).

The protein belongs to the CCM1 family. Binds to mitochondrial small subunit 15S rRNA.

The protein localises to the mitochondrion. Its function is as follows. Regulates mitochondrial small subunit maturation by controlling 15S rRNA 5'-end processing. Localizes to the 5' precursor of the 15S rRNA in a position that is subsequently occupied by mS47 in the mature yeast mtSSU. Uses structure and sequence-specific RNA recognition, binding to a single-stranded region of the precursor and specifically recognizing bases -6 to -1. The exchange of Ccm1 for mS47 is coupled to the irreversible removal of precursor rRNA that is accompanied by conformational changes of the mitoribosomal proteins uS5m and mS26. These conformational changes signal completion of 5'-end rRNA processing through protection of the mature 5'-end of the 15S rRNA and stabilization of mS47. The removal of the 5' precursor together with the dissociation of Ccm1 may be catalyzed by the 5'-3' exoribonuclease Pet127. Involved in the specific removal of group I introns in mitochondrial encoded transcripts. In Meyerozyma guilliermondii (strain ATCC 6260 / CBS 566 / DSM 6381 / JCM 1539 / NBRC 10279 / NRRL Y-324) (Yeast), this protein is Mitochondrial 15S rRNA processing factor CCM1 (CCM1).